The primary structure comprises 499 residues: Neuropeptide CCHamide-1 receptor (499 aa).

The Extracellular segment spans residues 1 to 85 (MIANLVSMET…GRRPETYIVP (85 aa)). Asn33 and Asn61 each carry an N-linked (GlcNAc...) asparagine glycan. Residues 86–106 (ILFALIFVVGVLGNGTLIVVF) form a helical membrane-spanning segment. Residues 107–117 (LSVRQMRNVPN) are Cytoplasmic-facing. The helical transmembrane segment at 118-138 (TYILSLALADLLVIITTVPLA) threads the bilayer. The Extracellular segment spans residues 139–162 (STVYTVEYWPYGSFLCSLSEFMKD). The cysteines at positions 154 and 240 are disulfide-linked. Residues 163-183 (VSIGVSVFTLTALSGDRYFAI) traverse the membrane as a helical segment. Over 184 to 203 (VDPLRKFHAHGGGRRATRMT) the chain is Cytoplasmic. A helical transmembrane segment spans residues 204–224 (LATAVSIWLLAILCGLPALIG). The Extracellular segment spans residues 225-259 (SNLKHLGINEKSIVICYPYPEEWGINYAKSMVLLH). The chain crosses the membrane as a helical span at residues 260–280 (FLVYYAIPLVVIAVFYVLIAL). Residues 281 to 309 (HLMYSASVPGEIQGAVRQVRARRKVAVTV) lie on the Cytoplasmic side of the membrane. A helical transmembrane segment spans residues 310–330 (LAFVVIFGICFLPYHVFFLWF). Residues 331-348 (YFWPTAQDDYNAFWHVLR) are Extracellular-facing. Residues 349–369 (IVAYCMSFANSCANPVALYFV) traverse the membrane as a helical segment. Residues 370-499 (SGAFRKHFNR…PAKFQESLLN (130 aa)) lie on the Cytoplasmic side of the membrane.

It belongs to the G-protein coupled receptor 1 family. Low levels in larval brain and gut with higher levels in adult brain and gut. In the brain expression is widely distributed, including strong expression in the mushroom bodies. Expressed weakly in s-LNv (small ventral lateral neurons) and strongly in l-LNv (large ventral lateral neurons), but not in other clock neurons.

It is found in the cell membrane. Receptor for the neuropeptide CCHamide-1. Plays a role in the modulation of starvation-induced olfactory behavior where starved flies show increased responsiveness to food odorants, repellants and pheromones. Contributes to regulation of sleep latency (the time required to fall asleep), amount of sleep and depth of sleep (arousability). Involved in modulation of PDP1 and PDF levels in s-LNv (small ventral lateral neurons) clock neurons in response to CCHa1 released by DN1a (anterior dorsal neurons 1) clock neurons, to regulate morning activity. In a subset of dopaminergic cells in the protocerebral anterior medial (PAM) cluster involved in suppressing arousability in response to CCHa1 secreted by gut enteroendocrine cells. This is Neuropeptide CCHamide-1 receptor from Drosophila melanogaster (Fruit fly).